Reading from the N-terminus, the 132-residue chain is uncharacterized protein (132 aa).

The chain crosses the membrane as a helical span at residues 66-86 (LPPMLLVLAALFVKGLIPLVL).

It localises to the membrane. This is an uncharacterized protein from Saccharomyces cerevisiae (strain ATCC 204508 / S288c) (Baker's yeast).